The sequence spans 198 residues: Superoxide dismutase [Fe] (198 aa).

The Fe cation site is built by His27, His74, Asp158, and His162.

It belongs to the iron/manganese superoxide dismutase family. Homodimer. Requires Fe cation as cofactor.

Its subcellular location is the cytoplasm. It carries out the reaction 2 superoxide + 2 H(+) = H2O2 + O2. Its function is as follows. Destroys superoxide anion radicals which are normally produced within the cells and which are toxic to biological systems. In Plasmodium malariae, this protein is Superoxide dismutase [Fe] (SODB).